Here is an 831-residue protein sequence, read N- to C-terminus: DNA replication licensing factor MCM6 (831 aa).

A C4-type zinc finger spans residues 155–182; the sequence is CLDCGSVIKNVEQQFKYTQPTICVSPTC. Residues 258 to 278 form a disordered region; sequence GERAECRRDSSQQKSSTAGHE. Basic and acidic residues predominate over residues 259 to 268; sequence ERAECRRDSS. Residues 345–551 form the MCM domain; that stretch reads YFNKLVGSMA…VTDYHIAHHI (207 aa). 395–402 provides a ligand contact to ATP; it reads GDPSCAKS. Residues 527–530 carry the Arginine finger motif; the sequence is SRFD. The interval 666-705 is disordered; it reads SEYQDANGDNMDDTDDIENPVDGEEDQQNGAAEPASATAD. The segment covering 675-692 has biased composition (acidic residues); the sequence is NMDDTDDIENPVDGEEDQ.

This sequence belongs to the MCM family. Component of the minichromosome maintenance (MCM) complex, a heterotetramer composed of MCM2, MCM3, MCM4, MCM5, MCM6 and MCM7. Interacts with ETG1. In terms of tissue distribution, expressed in shoot apex and flower buds.

It is found in the nucleus. It carries out the reaction ATP + H2O = ADP + phosphate + H(+). In terms of biological role, probable component of the MCM2-7 complex (MCM complex) that may function as a DNA helicase and which is essential to undergo a single round of replication initiation and elongation per cell cycle in eukaryotic cells. The protein is DNA replication licensing factor MCM6 (MCM6) of Arabidopsis thaliana (Mouse-ear cress).